Consider the following 250-residue polypeptide: Cytochrome c oxidase subunit 2 (250 aa).

Topologically, residues 1–27 (MGLLFNNLIMNFDAPSPWGIYFQDSAT) are mitochondrial intermembrane. The chain crosses the membrane as a helical span at residues 28-61 (PQMEGLVELHDNIMYYLVVILFGVGWILLSIIRN). Residues 62–77 (YISTKSPISHKYLNHG) lie on the Mitochondrial matrix side of the membrane. The chain crosses the membrane as a helical span at residues 78 to 107 (TLIELIWTITPAVILILIAFPSFKLLYLMD). The Mitochondrial intermembrane portion of the chain corresponds to 108 to 250 (EVSDPSMSVL…EKFLTWLEEQ (143 aa)). His185, Cys220, Glu222, Cys224, His228, and Met231 together coordinate Cu cation. Glu222 lines the Mg(2+) pocket.

This sequence belongs to the cytochrome c oxidase subunit 2 family. As to quaternary structure, component of the cytochrome c oxidase (complex IV, CIV), a multisubunit enzyme composed of 11 subunits. The complex is composed of a catalytic core of 3 subunits Cox1, Cox2 and Cox3, encoded in the mitochondrial DNA, and 8 supernumerary subunits Cox4, Cox5a/Cox5, Cox6, Cox7, Cox8, Cox7a/Cox9, Cox6b/Cox12 and Cox6a/Cox13, which are encoded in the nuclear genome. The complex exists as a monomer or a dimer and forms respiratory supercomplexes (SCs) in the inner mitochondrial membrane with NADH-ubiquinone oxidoreductase (complex I, CI) and ubiquinol-cytochrome c oxidoreductase (cytochrome b-c1 complex, complex III, CIII), resulting in various different assemblies (supercomplexes I(1)IV(1), I(1)III(3)IV(2), III(2)IV(1) and III(2)IV(2) as well as larger supercomplexes of compositions like I(1)III(2)IV(5-6)). Requires Cu cation as cofactor.

The protein localises to the mitochondrion inner membrane. The enzyme catalyses 4 Fe(II)-[cytochrome c] + O2 + 8 H(+)(in) = 4 Fe(III)-[cytochrome c] + 2 H2O + 4 H(+)(out). Functionally, component of the cytochrome c oxidase, the last enzyme in the mitochondrial electron transport chain which drives oxidative phosphorylation. The respiratory chain contains 3 multisubunit complexes succinate dehydrogenase (complex II, CII), ubiquinol-cytochrome c oxidoreductase (cytochrome b-c1 complex, complex III, CIII) and cytochrome c oxidase (complex IV, CIV), that cooperate to transfer electrons derived from NADH and succinate to molecular oxygen, creating an electrochemical gradient over the inner membrane that drives transmembrane transport and the ATP synthase. Cytochrome c oxidase is the component of the respiratory chain that catalyzes the reduction of oxygen to water. Electrons originating from reduced cytochrome c in the intermembrane space (IMS) are transferred via the dinuclear copper A center (CU(A)) of Cox2 and heme A of Cox1 to the active site in Cox1, a binuclear center (BNC) formed by heme A3 and copper B (CU(B)). The BNC reduces molecular oxygen to 2 water molecules using 4 electrons from cytochrome c in the IMS and 4 protons from the mitochondrial matrix. In Neurospora crassa (strain ATCC 24698 / 74-OR23-1A / CBS 708.71 / DSM 1257 / FGSC 987), this protein is Cytochrome c oxidase subunit 2 (cox-2).